The sequence spans 680 residues: DNA-directed RNA polymerase subunit beta' (680 aa).

Zn(2+) is bound by residues Cys69, Cys71, Cys87, and Cys90. Residues Asp489, Asp491, and Asp493 each coordinate Mg(2+).

It belongs to the RNA polymerase beta' chain family. RpoC1 subfamily. As to quaternary structure, in plastids the minimal PEP RNA polymerase catalytic core is composed of four subunits: alpha, beta, beta', and beta''. When a (nuclear-encoded) sigma factor is associated with the core the holoenzyme is formed, which can initiate transcription. Mg(2+) is required as a cofactor. The cofactor is Zn(2+).

Its subcellular location is the plastid. The protein localises to the chloroplast. The enzyme catalyses RNA(n) + a ribonucleoside 5'-triphosphate = RNA(n+1) + diphosphate. In terms of biological role, DNA-dependent RNA polymerase catalyzes the transcription of DNA into RNA using the four ribonucleoside triphosphates as substrates. This chain is DNA-directed RNA polymerase subunit beta', found in Lobularia maritima (Sweet alyssum).